The primary structure comprises 109 residues: RNA-binding protein Hfq (109 aa).

The 60-residue stretch at 9-68 (DPFLNALRKEKVSVSVYLVNGIKLQGQVEAFDQFCIVLRNTVNQMVYKHAISTIVPAKSV) folds into the Sm domain.

This sequence belongs to the Hfq family. Homohexamer.

Its function is as follows. RNA chaperone that binds small regulatory RNA (sRNAs) and mRNAs to facilitate mRNA translational regulation in response to envelope stress, environmental stress and changes in metabolite concentrations. Also binds with high specificity to tRNAs. The protein is RNA-binding protein Hfq of Francisella philomiragia subsp. philomiragia (strain ATCC 25017 / CCUG 19701 / FSC 153 / O#319-036).